A 23-amino-acid chain; its full sequence is Caerulein precursor fragment BM2 (23 aa).

As to expression, expressed by the skin glands.

It is found in the secreted. Antimicrobial peptide. This is Caerulein precursor fragment BM2 from Xenopus boumbaensis (Mawa clawed frog).